A 1517-amino-acid chain; its full sequence is DNA-directed RNA polymerase subunit beta' (1517 aa).

Positions 71, 73, 86, and 89 each coordinate Zn(2+). The Mg(2+) site is built by Asp482, Asp484, and Asp486. Residues Cys812, Cys886, Cys893, and Cys896 each coordinate Zn(2+).

This sequence belongs to the RNA polymerase beta' chain family. The RNAP catalytic core consists of 2 alpha, 1 beta, 1 beta' and 1 omega subunit. When a sigma factor is associated with the core the holoenzyme is formed, which can initiate transcription. Requires Mg(2+) as cofactor. Zn(2+) is required as a cofactor.

It catalyses the reaction RNA(n) + a ribonucleoside 5'-triphosphate = RNA(n+1) + diphosphate. Its function is as follows. DNA-dependent RNA polymerase catalyzes the transcription of DNA into RNA using the four ribonucleoside triphosphates as substrates. The polypeptide is DNA-directed RNA polymerase subunit beta' (Campylobacter jejuni subsp. jejuni serotype O:2 (strain ATCC 700819 / NCTC 11168)).